Consider the following 544-residue polypeptide: Chaperonin GroEL 2 (544 aa).

Residues 30 to 33, 87 to 91, glycine 415, 480 to 482, and aspartate 496 contribute to the ATP site; these read TLGP, DGTTT, and NAA.

The protein belongs to the chaperonin (HSP60) family. In terms of assembly, forms a cylinder of 14 subunits composed of two heptameric rings stacked back-to-back. Interacts with the co-chaperonin GroES.

Its subcellular location is the cytoplasm. It carries out the reaction ATP + H2O + a folded polypeptide = ADP + phosphate + an unfolded polypeptide.. In terms of biological role, together with its co-chaperonin GroES, plays an essential role in assisting protein folding. The GroEL-GroES system forms a nano-cage that allows encapsulation of the non-native substrate proteins and provides a physical environment optimized to promote and accelerate protein folding. The polypeptide is Chaperonin GroEL 2 (Albidiferax ferrireducens (strain ATCC BAA-621 / DSM 15236 / T118) (Rhodoferax ferrireducens)).